The sequence spans 267 residues: Indole-3-glycerol phosphate synthase (267 aa).

Belongs to the TrpC family.

The enzyme catalyses 1-(2-carboxyphenylamino)-1-deoxy-D-ribulose 5-phosphate + H(+) = (1S,2R)-1-C-(indol-3-yl)glycerol 3-phosphate + CO2 + H2O. Its pathway is amino-acid biosynthesis; L-tryptophan biosynthesis; L-tryptophan from chorismate: step 4/5. This is Indole-3-glycerol phosphate synthase from Deinococcus radiodurans (strain ATCC 13939 / DSM 20539 / JCM 16871 / CCUG 27074 / LMG 4051 / NBRC 15346 / NCIMB 9279 / VKM B-1422 / R1).